Reading from the N-terminus, the 443-residue chain is Protein king tubby (443 aa).

Disordered regions lie at residues 57–80 (TNGSPGGINSVAMNTSRNHSNNMR) and 98–191 (HELE…EGDV). Polar residues predominate over residues 67–80 (VAMNTSRNHSNNMR). Residues 113–128 (QQQQSASHSANSTQSQ) are compositionally biased toward low complexity. Phosphoserine is present on Ser-136. The span at 177-186 (NGTGNGTGGE) shows a compositional bias: gly residues.

This sequence belongs to the TUB family.

It is found in the cytoplasm. Its subcellular location is the nucleus. The protein resides in the cell projection. The protein localises to the cilium membrane. It localises to the rhabdomere. The polypeptide is Protein king tubby (Drosophila sechellia (Fruit fly)).